The sequence spans 616 residues: Chaperone protein HscA (616 aa).

It belongs to the heat shock protein 70 family.

Functionally, chaperone involved in the maturation of iron-sulfur cluster-containing proteins. Has a low intrinsic ATPase activity which is markedly stimulated by HscB. Involved in the maturation of IscU. In Escherichia coli O17:K52:H18 (strain UMN026 / ExPEC), this protein is Chaperone protein HscA.